Here is a 69-residue protein sequence, read N- to C-terminus: Parvalbumin beta 3 (69 aa).

The residue at position 1 (Ala-1) is an N-acetylalanine. The region spanning 24 to 59 is the EF-hand domain; sequence FNYKTFFKFFAIIDQDHSGFIEEEELKLFLQTFSAG. Asp-37, Asp-39, Ser-41, Phe-43, Glu-45, and Glu-48 together coordinate Ca(2+).

Belongs to the parvalbumin family.

Its function is as follows. In muscle, parvalbumin is thought to be involved in relaxation after contraction. It binds two calcium ions. In Merluccius polli (Benguela hake), this protein is Parvalbumin beta 3.